The chain runs to 298 residues: Zinc import ATP-binding protein ZnuC (298 aa).

An ABC transporter domain is found at 17–232; that stretch reads IELRNAGVYR…PEYVRLFGSR (216 aa). An ATP-binding site is contributed by 49-56; the sequence is GPNGAGKS. A disordered region spans residues 273-298; sequence RGHCHVEDGHHHDHEHHHHEGGQPRA. Residues 276 to 298 show a composition bias toward basic and acidic residues; sequence CHVEDGHHHDHEHHHHEGGQPRA.

This sequence belongs to the ABC transporter superfamily. Zinc importer (TC 3.A.1.15.5) family. The complex is composed of two ATP-binding proteins (ZnuC), two transmembrane proteins (ZnuB) and a solute-binding protein (ZnuA).

The protein resides in the cell inner membrane. It carries out the reaction Zn(2+)(out) + ATP(in) + H2O(in) = Zn(2+)(in) + ADP(in) + phosphate(in) + H(+)(in). Its function is as follows. Part of the ABC transporter complex ZnuABC involved in zinc import. Responsible for energy coupling to the transport system. In Brucella abortus (strain 2308), this protein is Zinc import ATP-binding protein ZnuC.